Reading from the N-terminus, the 236-residue chain is MSRPCGLPEPVRNNLIDDAKARLRKSDVGTRYSHLSSNKFSVLVPLLARGGKLYLMFTVRSDKLKREPGEVCFPGGKRDPVDTDDTATALREAQEEVGLHPHQVEVVSHLVPYVFDNDALVTPVVGFLDHNFQAQPNADEVKEVFFVPLDYFLHPQVYYQKQITQSGRDFIMHCFEYKDPETGVNYLIQGMTSKLAVLVALIILEQSPAFKIDFDLHDLIPSCERTFLWRYSLSKL.

The residue at position 20 (lysine 20) is an N6-succinyllysine. The Nudix hydrolase domain occupies 37–169 (SNKFSVLVPL…QKQITQSGRD (133 aa)). The short motif at 77 to 98 (KRDPVDTDDTATALREAQEEVG) is the Nudix box element. Residues glutamate 92 and glutamate 96 each coordinate Mg(2+). An N6-succinyllysine modification is found at lysine 178. Positions 234-236 (SKL) match the Microbody targeting signal motif.

This sequence belongs to the Nudix hydrolase family. PCD1 subfamily. Monomer. The cofactor is Mn(2+). Mg(2+) is required as a cofactor. As to expression, highly expressed in liver, brown adipose tissue and heart. Expressed at intermediate level in lung and kidney and at low level in brain. Expressed in liver, brown adipose tissue and heart at 20 times lower levels than isoform 1.

Its subcellular location is the peroxisome. The enzyme catalyses hexanoyl-CoA + H2O = hexanoyl-4'-phosphopantetheine + adenosine 3',5'-bisphosphate + 2 H(+). The catalysed reaction is octanoyl-CoA + H2O = S-octanoyl-4'-phosphopantetheine + adenosine 3',5'-bisphosphate + 2 H(+). It catalyses the reaction butanoyl-CoA + H2O = S-butanoyl-4'-phosphopantetheine + adenosine 3',5'-bisphosphate + 2 H(+). It carries out the reaction decanoyl-CoA + H2O = decanoyl-4'-phosphopantetheine + adenosine 3',5'-bisphosphate + 2 H(+). The enzyme catalyses dodecanoyl-CoA + H2O = S-dodecanoyl-4'-phosphopantetheine + adenosine 3',5'-bisphosphate + 2 H(+). The catalysed reaction is tetradecanoyl-CoA + H2O = tetradecanoyl-4'-phosphopantetheine + adenosine 3',5'-bisphosphate + 2 H(+). It catalyses the reaction choloyl-CoA + H2O = S-choloyl-4'-phosphopantetheine + adenosine 3',5'-bisphosphate + 2 H(+). It carries out the reaction 3alpha,7alpha,12alpha-trihydroxy-5beta-cholestan-26-oyl-CoA + H2O = 3alpha,7alpha,12alpha-trihydroxy-5beta-cholestan-26-oyl-4'-phosphopantetheine + adenosine 3',5'-bisphosphate + 2 H(+). The enzyme catalyses acetyl-CoA + H2O = S-acetyl-4'-phosphopantetheine + adenosine 3',5'-bisphosphate + 2 H(+). The catalysed reaction is CoA + H2O = (R)-4'-phosphopantetheine + adenosine 3',5'-bisphosphate + 2 H(+). It catalyses the reaction propanoyl-CoA + H2O = propanoyl-4'-phosphopantetheine + adenosine 3',5'-bisphosphate + 2 H(+). It carries out the reaction malonyl-CoA + H2O = malonyl-4'-phosphopantetheine + adenosine 3',5'-bisphosphate + 2 H(+). The enzyme catalyses succinyl-CoA + H2O = succinyl-4'-phosphopantetheine + adenosine 3',5'-bisphosphate + 2 H(+). The catalysed reaction is a 5'-end CoA-ribonucleoside in mRNA + H2O = a 5'-end phospho-adenosine-phospho-ribonucleoside in mRNA + (R)-4'-phosphopantetheine + 2 H(+). Inhibited by fluoride. Functionally, fatty acyl-coenzyme A (CoA) diphosphatase that hydrolyzes fatty acyl-CoA to yield acyl-4'-phosphopantetheine and adenosine 3',5'-bisphosphate. Cleaves CoA, CoA esters and oxidized CoA with similar efficiencies. Preferentially hydrolyzes medium-chain acyl-CoAs and bile acid-CoAs. Has no activity toward NDP-sugars, CDP-alcohols, (deoxy)nucleoside 5'-triphosphates, nucleoside 5'-di or monophosphates, diadenosine polyphosphates, NAD, NADH, NADP, NADPH or thymidine-5'-monophospho-p-nitrophenyl ester. May be required to eliminate oxidized CoA from peroxisomes, or regulate CoA and acyl-CoA levels in this organelle in response to metabolic demand. Does not play a role in U8 snoRNA decapping activity. Binds U8 snoRNA. Exhibits decapping activity towards dpCoA-capped RNAs in vitro. The chain is Peroxisomal coenzyme A diphosphatase NUDT7 from Mus musculus (Mouse).